We begin with the raw amino-acid sequence, 114 residues long: Non-specific lipid-transfer protein 1 (114 aa).

Residues 1 to 23 (MEIAGKIACFVVLCMVVAAPCAE) form the signal peptide. 4 disulfides stabilise this stretch: Cys27-Cys73, Cys37-Cys50, Cys51-Cys96, and Cys71-Cys110.

Belongs to the plant LTP family. As to expression, high expression in leaf epidermis and shoot apex, and also in root epidermis during seedling germination.

In terms of biological role, plant non-specific lipid-transfer proteins transfer phospholipids as well as galactolipids across membranes. Binds cis-unsaturated fatty acids and jasmonic acid with a higher affinity than linear chain fatty acids. Formation of the complex with jasmonic acid results in a conformational change facilitating the LPT1 binding on the elicitin plasma membrane receptor that is known to be involved in plant defense induction. May also play a role in wax or cutin deposition in the cell walls of expanding epidermal cells and certain secretory tissues. This chain is Non-specific lipid-transfer protein 1 (LTP1), found in Nicotiana tabacum (Common tobacco).